Here is a 280-residue protein sequence, read N- to C-terminus: 2-dehydro-3-deoxyphosphooctonate aldolase 2 (280 aa).

The protein belongs to the KdsA family.

The protein resides in the cytoplasm. The catalysed reaction is D-arabinose 5-phosphate + phosphoenolpyruvate + H2O = 3-deoxy-alpha-D-manno-2-octulosonate-8-phosphate + phosphate. It functions in the pathway carbohydrate biosynthesis; 3-deoxy-D-manno-octulosonate biosynthesis; 3-deoxy-D-manno-octulosonate from D-ribulose 5-phosphate: step 2/3. It participates in bacterial outer membrane biogenesis; lipopolysaccharide biosynthesis. The polypeptide is 2-dehydro-3-deoxyphosphooctonate aldolase 2 (kdsA2) (Pseudomonas putida (strain ATCC 47054 / DSM 6125 / CFBP 8728 / NCIMB 11950 / KT2440)).